A 614-amino-acid polypeptide reads, in one-letter code: Maltose permease MAL61 (614 aa).

A disordered region spans residues 1–48 (MKGLSSLINRKKDRNDSHLDEIENGVNATEFNSIEMEEQGKKSDFDLS). Topologically, residues 1-108 (MKGLSSLINR…AAAWSLLVST (108 aa)) are cytoplasmic. The segment covering 38–48 (EQGKKSDFDLS) has biased composition (basic and acidic residues). A helical membrane pass occupies residues 109 to 129 (TLIQEGYDTAILGAFYALPVF). The Extracellular portion of the chain corresponds to 130–144 (QKKYGSLNSNTGDYE). Residues 145 to 165 (ISVSWQIGLCLCYMAGEIVGL) traverse the membrane as a helical segment. Residues 166 to 180 (QVTGPSVDYMGNRYT) lie on the Cytoplasmic side of the membrane. Residues 181 to 201 (LIMALFFLAAFIFILYFCKSL) traverse the membrane as a helical segment. Gly-202 is a topological domain (extracellular). Residues 203–223 (MIAVGQALCGMPWGCFQCLTV) form a helical membrane-spanning segment. At 224–236 (SYASEICPLALRY) the chain is on the cytoplasmic side. The helical transmembrane segment at 237–257 (YLTTYSNLCWTFGQLFAAGIM) threads the bilayer. Topologically, residues 258-272 (KNSQNKYANSELGYK) are extracellular. A helical membrane pass occupies residues 273 to 293 (LPFALQWIWPLPLAVGIFLAP). The Cytoplasmic segment spans residues 294 to 364 (ESPWWLVKKG…KDGINRRRTR (71 aa)). Residues 365 to 385 (IACLCWIGQCSCGASLIGYST) form a helical membrane-spanning segment. Topologically, residues 386–398 (YFYEKAGVSTDTA) are extracellular. A helical membrane pass occupies residues 399 to 419 (FTFSIIQYCLGIAATFVSWWA). Residues 420-427 (SKYCGRFD) lie on the Cytoplasmic side of the membrane. A helical membrane pass occupies residues 428–448 (LYAFGLAFQAIMFFIIGGLGC). Over 449 to 460 (SDTHGAKMGSGA) the chain is Extracellular. The chain crosses the membrane as a helical span at residues 461–481 (LLMVVAFFYNLGIAPVVFCLV). Over 482–493 (SEMPSSRLRTKT) the chain is Cytoplasmic. Residues 494–514 (IILARNAYNVIQVVVTVLIMY) traverse the membrane as a helical segment. The Extracellular segment spans residues 515 to 526 (QLNSEKWNWGAK). The chain crosses the membrane as a helical span at residues 527-547 (SGFFWGGFCLATLAWAVVDLP). Residues 548–614 (ETAGRTFIEI…GRSTPSVVNK (67 aa)) lie on the Cytoplasmic side of the membrane. The segment at 594 to 614 (KEDLETSVVDEGRSTPSVVNK) is disordered.

It belongs to the major facilitator superfamily. Sugar transporter (TC 2.A.1.1) family.

It localises to the membrane. Transporter for maltose. This is Maltose permease MAL61 (MAL61) from Saccharomyces cerevisiae (Baker's yeast).